Here is a 540-residue protein sequence, read N- to C-terminus: Kinesin light chain (540 aa).

A coiled-coil region spans residues 34 to 138 (LETSVKGVKE…NKHLKYMASI (105 aa)). TPR repeat units follow at residues 206 to 239 (LRTL…LEKT), 248 to 281 (ATML…REKC), 290 to 323 (AATL…REKV), 332 to 365 (AKQL…YESK), 374 to 407 (AKTK…AHER), and 456 to 489 (TTTL…KKQH).

Belongs to the kinesin light chain family. As to quaternary structure, oligomeric complex composed of two heavy chains and two light chains. Interacts with unc-83; the interaction is direct. Interacts with unc-33; the interaction regulates unc-33 neurite localization. Interacts with casy-1.

The protein localises to the cytoplasm. Its subcellular location is the cytoskeleton. It localises to the nucleus envelope. Its function is as follows. Kinesin is a microtubule-associated force-producing protein that may play a role in organelle transport. The light chain may function in coupling of cargo to the heavy chain or in the modulation of its ATPase activity. Recruits unc-83 (within the unc-83-unc-84 LINC complex) to the nuclear envelope during nuclear migration to mediate the link between the nuclear envelope and the microtubule cytoskeleton in hypodermal precursor cells. The protein is Kinesin light chain of Caenorhabditis elegans.